The chain runs to 518 residues: 3-octaprenyl-4-hydroxybenzoate carboxy-lyase (518 aa).

Residue Asn177 participates in Mn(2+) binding. Prenylated FMN is bound by residues 180-182 (IYR), 194-196 (RWL), and 199-200 (RG). A Mn(2+)-binding site is contributed by Glu243. Residue Asp318 is the Proton donor of the active site.

It belongs to the UbiD family. As to quaternary structure, homohexamer. Prenylated FMN is required as a cofactor. It depends on Mn(2+) as a cofactor.

Its subcellular location is the cell membrane. The enzyme catalyses a 4-hydroxy-3-(all-trans-polyprenyl)benzoate + H(+) = a 2-(all-trans-polyprenyl)phenol + CO2. It participates in cofactor biosynthesis; ubiquinone biosynthesis. Its function is as follows. Catalyzes the decarboxylation of 3-octaprenyl-4-hydroxy benzoate to 2-octaprenylphenol, an intermediate step in ubiquinone biosynthesis. The polypeptide is 3-octaprenyl-4-hydroxybenzoate carboxy-lyase (Burkholderia orbicola (strain AU 1054)).